The following is a 127-amino-acid chain: Small ribosomal subunit protein uS11 (127 aa).

This sequence belongs to the universal ribosomal protein uS11 family. In terms of assembly, part of the 30S ribosomal subunit. Interacts with proteins S7 and S18. Binds to IF-3.

Its function is as follows. Located on the platform of the 30S subunit, it bridges several disparate RNA helices of the 16S rRNA. Forms part of the Shine-Dalgarno cleft in the 70S ribosome. The chain is Small ribosomal subunit protein uS11 from Chlorobium luteolum (strain DSM 273 / BCRC 81028 / 2530) (Pelodictyon luteolum).